A 288-amino-acid polypeptide reads, in one-letter code: Pantothenate synthetase (288 aa).

30-37 (MGNLHEGH) serves as a coordination point for ATP. The active-site Proton donor is histidine 37. A (R)-pantoate-binding site is contributed by glutamine 61. Position 61 (glutamine 61) interacts with beta-alanine. 148–151 (GQKD) lines the ATP pocket. Glutamine 154 is a (R)-pantoate binding site. ATP-binding positions include valine 177 and 185–188 (LSSR).

The protein belongs to the pantothenate synthetase family. Homodimer.

It localises to the cytoplasm. The enzyme catalyses (R)-pantoate + beta-alanine + ATP = (R)-pantothenate + AMP + diphosphate + H(+). The protein operates within cofactor biosynthesis; (R)-pantothenate biosynthesis; (R)-pantothenate from (R)-pantoate and beta-alanine: step 1/1. Functionally, catalyzes the condensation of pantoate with beta-alanine in an ATP-dependent reaction via a pantoyl-adenylate intermediate. This chain is Pantothenate synthetase, found in Psychrobacter arcticus (strain DSM 17307 / VKM B-2377 / 273-4).